A 517-amino-acid polypeptide reads, in one-letter code: Pseudaminic acid cytidylyltransferase and UDP-2,4-diacetamido-2,4,6-trideoxy-beta-L-altropyranose hydrolase (517 aa).

The pseudaminic acid cytidylyltransferase stretch occupies residues 1–208 (MRAIAIVLAR…ELSPLEVQDI (208 aa)). The interval 209 to 517 (AHFRRFRISQ…EGALREFLEI (309 aa)) is UDP-2,4-diacetamido-2,4,6-trideoxy-beta-L-altropyranose hydrolase. Catalysis depends on His-244, which acts as the Proton acceptor; for UDP-2,4-diacetamido-2,4,6-trideoxy-beta-L-altropyranose hydrolase activity.

The protein in the N-terminal section; belongs to the CMP-NeuNAc synthase family. This sequence in the C-terminal section; belongs to the PseG family. As to quaternary structure, monomer. It depends on Mg(2+) as a cofactor.

The catalysed reaction is UDP-2,4-diacetamido-2,4,6-trideoxy-beta-L-altrose + H2O = 2,4-diacetamido-2,4,6-trideoxy-beta-L-altrose + UDP + H(+). The enzyme catalyses pseudaminate + CTP = CMP-pseudaminate + diphosphate. Functionally, catalyzes the fourth and sixth steps in the biosynthesis of pseudaminic acid, a sialic-acid-like sugar that is used to modify flagellin. The C-terminus mediates the fourth step of the pathway and catalyzes the removal of UDP from C-1 of UDP-2,4-diacetamido-2,4,6-trideoxy-beta-L-altropyranose forming 2,4-diacetamido-2,4,6-trideoxy-beta-L-altropyranose. The N-terminal part mediates the last step of the pathway by mediating activation of pseudaminic acid with CMP by forming CMP-pseudaminic acid. The polypeptide is Pseudaminic acid cytidylyltransferase and UDP-2,4-diacetamido-2,4,6-trideoxy-beta-L-altropyranose hydrolase (Helicobacter pylori (strain ATCC 700392 / 26695) (Campylobacter pylori)).